The primary structure comprises 464 residues: Methionine aminopeptidase 2 (464 aa).

Residues 1 to 86 are disordered; that stretch reads MGSKTPGNHR…RKKKKKNTKE (86 aa). Over residues 43 to 54 the composition is skewed to acidic residues; the sequence is GESEGGEDEDDD. The segment covering 72–83 has biased composition (basic residues); that stretch reads KRNKRRKKKKKN. H216 serves as a coordination point for substrate. Residues D237, D248, and H317 each contribute to the a divalent metal cation site. Position 325 (H325) interacts with substrate. Positions 350 and 445 each coordinate a divalent metal cation.

Belongs to the peptidase M24A family. Methionine aminopeptidase eukaryotic type 2 subfamily. The cofactor is Co(2+). Zn(2+) serves as cofactor. It depends on Mn(2+) as a cofactor. Requires Fe(2+) as cofactor.

It is found in the cytoplasm. It carries out the reaction Release of N-terminal amino acids, preferentially methionine, from peptides and arylamides.. Its function is as follows. Cotranslationally removes the N-terminal methionine from nascent proteins. The N-terminal methionine is often cleaved when the second residue in the primary sequence is small and uncharged (Met-Ala-, Cys, Gly, Pro, Ser, Thr, or Val). The sequence is that of Methionine aminopeptidase 2 from Ajellomyces capsulatus (strain NAm1 / WU24) (Darling's disease fungus).